A 344-amino-acid polypeptide reads, in one-letter code: Phosphoribosylformylglycinamidine cyclo-ligase (344 aa).

The protein belongs to the AIR synthase family.

It localises to the cytoplasm. It catalyses the reaction 2-formamido-N(1)-(5-O-phospho-beta-D-ribosyl)acetamidine + ATP = 5-amino-1-(5-phospho-beta-D-ribosyl)imidazole + ADP + phosphate + H(+). It functions in the pathway purine metabolism; IMP biosynthesis via de novo pathway; 5-amino-1-(5-phospho-D-ribosyl)imidazole from N(2)-formyl-N(1)-(5-phospho-D-ribosyl)glycinamide: step 2/2. This is Phosphoribosylformylglycinamidine cyclo-ligase from Haemophilus influenzae (strain PittEE).